The following is a 132-amino-acid chain: MTMTDPVADMLTRLRNANSAYHDTVSMPYSKLKARIAEILKAEGYIADWSEEPARVGKTLTLSLKFGSNRERSIAGVRRISKPGLRVYAKSTNLPRVFGGLGIAILSTSSGLLTDKQAGKKGVGGEVLAYVW.

Belongs to the universal ribosomal protein uS8 family. In terms of assembly, part of the 30S ribosomal subunit. Contacts proteins S5 and S12.

Its function is as follows. One of the primary rRNA binding proteins, it binds directly to 16S rRNA central domain where it helps coordinate assembly of the platform of the 30S subunit. The sequence is that of Small ribosomal subunit protein uS8 from Kocuria rhizophila (strain ATCC 9341 / DSM 348 / NBRC 103217 / DC2201).